The sequence spans 297 residues: Probable endonuclease 4 (297 aa).

Positions 69, 110, 145, 179, 182, 214, 227, 229, and 259 each coordinate Zn(2+).

Belongs to the AP endonuclease 2 family. It depends on Zn(2+) as a cofactor.

The catalysed reaction is Endonucleolytic cleavage to 5'-phosphooligonucleotide end-products.. Endonuclease IV plays a role in DNA repair. It cleaves phosphodiester bonds at apurinic or apyrimidinic (AP) sites, generating a 3'-hydroxyl group and a 5'-terminal sugar phosphate. This Listeria innocua serovar 6a (strain ATCC BAA-680 / CLIP 11262) protein is Probable endonuclease 4.